The chain runs to 196 residues: Dephospho-CoA kinase (196 aa).

The 194-residue stretch at Arg-3–Pro-196 folds into the DPCK domain. Gly-11–Thr-16 is an ATP binding site.

The protein belongs to the CoaE family.

It localises to the cytoplasm. It catalyses the reaction 3'-dephospho-CoA + ATP = ADP + CoA + H(+). It functions in the pathway cofactor biosynthesis; coenzyme A biosynthesis; CoA from (R)-pantothenate: step 5/5. Functionally, catalyzes the phosphorylation of the 3'-hydroxyl group of dephosphocoenzyme A to form coenzyme A. This is Dephospho-CoA kinase from Aquifex aeolicus (strain VF5).